The primary structure comprises 512 residues: Glutamyl-tRNA(Gln) amidotransferase subunit A (512 aa).

Catalysis depends on charge relay system residues lysine 82 and serine 157. Serine 181 acts as the Acyl-ester intermediate in catalysis.

The protein belongs to the amidase family. GatA subfamily. In terms of assembly, heterotrimer of A, B and C subunits.

The enzyme catalyses L-glutamyl-tRNA(Gln) + L-glutamine + ATP + H2O = L-glutaminyl-tRNA(Gln) + L-glutamate + ADP + phosphate + H(+). In terms of biological role, allows the formation of correctly charged Gln-tRNA(Gln) through the transamidation of misacylated Glu-tRNA(Gln) in organisms which lack glutaminyl-tRNA synthetase. The reaction takes place in the presence of glutamine and ATP through an activated gamma-phospho-Glu-tRNA(Gln). This Bordetella pertussis (strain Tohama I / ATCC BAA-589 / NCTC 13251) protein is Glutamyl-tRNA(Gln) amidotransferase subunit A.